The following is a 210-amino-acid chain: MSWFITFEGPEGAGKTTQCALLAARLREAGYSLLVTREPGGTPLGETIREWLLAGEALRPETEALLFTAARAEHVWDRIRPALERGTIVLCDRYVDSTLAYQGAGRGLDEGWLRELHRIATGDLWPDLTILLDVPVEVGLARRRAAAATITRLDQEELAFHRRVRAWYHAAAQRDPQRWRVVDATLPPEVVADAVWATVTEVMKRGRRSP.

9 to 16 (GPEGAGKT) is an ATP binding site.

Belongs to the thymidylate kinase family.

It catalyses the reaction dTMP + ATP = dTDP + ADP. Functionally, phosphorylation of dTMP to form dTDP in both de novo and salvage pathways of dTTP synthesis. The polypeptide is Thymidylate kinase (Thermomicrobium roseum (strain ATCC 27502 / DSM 5159 / P-2)).